The chain runs to 482 residues: Serine carboxypeptidase-like 26 (482 aa).

An N-terminal signal peptide occupies residues 1-28 (MAVAAAAAARRRDVSCLLLLLCFSSSMA). 3 disulfide bridges follow: cysteine 101/cysteine 366, cysteine 263/cysteine 274, and cysteine 298/cysteine 333. Asparagine 152 carries N-linked (GlcNAc...) asparagine glycosylation. Residue serine 194 is part of the active site. Asparagine 269, asparagine 301, asparagine 354, and asparagine 375 each carry an N-linked (GlcNAc...) asparagine glycan. Residues aspartate 403 and histidine 455 contribute to the active site.

This sequence belongs to the peptidase S10 family.

The protein resides in the secreted. In terms of biological role, acts as a positive regulator of grain size by controlling grain width, filling and weight. High expression of GS5 in the grain is correlated with large grain size. This Oryza sativa subsp. japonica (Rice) protein is Serine carboxypeptidase-like 26.